Here is a 325-residue protein sequence, read N- to C-terminus: Ribosomal RNA small subunit methyltransferase H (325 aa).

S-adenosyl-L-methionine is bound by residues 33–35 (GGH), D52, L87, D101, and Q108. A disordered region spans residues 285-325 (AEPAGEVEKADNPRAASVRLRAAERTAPNPDRTQPTIGGAS). A compositionally biased stretch (polar residues) spans 315 to 325 (DRTQPTIGGAS).

The protein belongs to the methyltransferase superfamily. RsmH family.

Its subcellular location is the cytoplasm. It carries out the reaction cytidine(1402) in 16S rRNA + S-adenosyl-L-methionine = N(4)-methylcytidine(1402) in 16S rRNA + S-adenosyl-L-homocysteine + H(+). Functionally, specifically methylates the N4 position of cytidine in position 1402 (C1402) of 16S rRNA. The protein is Ribosomal RNA small subunit methyltransferase H of Frankia alni (strain DSM 45986 / CECT 9034 / ACN14a).